A 110-amino-acid polypeptide reads, in one-letter code: Large ribosomal subunit protein uL22 (110 aa).

The protein belongs to the universal ribosomal protein uL22 family. In terms of assembly, part of the 50S ribosomal subunit.

In terms of biological role, this protein binds specifically to 23S rRNA; its binding is stimulated by other ribosomal proteins, e.g. L4, L17, and L20. It is important during the early stages of 50S assembly. It makes multiple contacts with different domains of the 23S rRNA in the assembled 50S subunit and ribosome. Functionally, the globular domain of the protein is located near the polypeptide exit tunnel on the outside of the subunit, while an extended beta-hairpin is found that lines the wall of the exit tunnel in the center of the 70S ribosome. This is Large ribosomal subunit protein uL22 from Solidesulfovibrio magneticus (strain ATCC 700980 / DSM 13731 / RS-1) (Desulfovibrio magneticus).